The sequence spans 501 residues: 2-phosphoxylose phosphatase 1 (501 aa).

The Cytoplasmic segment spans residues 1–6; the sequence is MLLRNR. Residues 7–27 traverse the membrane as a helical; Signal-anchor for type II membrane protein segment; the sequence is FLLLLALAGLLAFLSLSLQFF. Residues 28–501 are Lumenal-facing; the sequence is SRWLPVSLQL…YYDACHQRLF (474 aa). His-120 acts as the Nucleophile in catalysis. N-linked (GlcNAc...) asparagine glycosylation is found at Asn-328 and Asn-377. Residue Asp-402 is the Proton donor of the active site. Asn-488 carries N-linked (GlcNAc...) asparagine glycosylation.

Belongs to the histidine acid phosphatase family.

Its subcellular location is the golgi apparatus membrane. It carries out the reaction 3-O-[beta-D-GlcA-(1-&gt;3)-beta-D-Gal-(1-&gt;3)-beta-D-Gal-(1-&gt;4)-beta-D-2-O-P-Xyl]-L-seryl-[protein] + H2O = 3-O-(beta-D-GlcA-(1-&gt;3)-beta-D-Gal-(1-&gt;3)-beta-D-Gal-(1-&gt;4)-beta-D-Xyl)-L-seryl-[protein] + phosphate. In terms of biological role, responsible for the 2-O-dephosphorylation of xylose in the glycosaminoglycan-protein linkage region of proteoglycans thereby regulating the amount of mature glycosaminoglycan (GAG) chains. Sulfated glycosaminoglycans (GAGs), including heparan sulfate and chondroitin sulfate, are synthesized on the so-called common GAG-protein linkage region (GlcUAbeta1-3Galbeta1-3Galbeta1-4Xylbeta1-O-Ser) of core proteins, which is formed by the stepwise addition of monosaccharide residues by the respective specific glycosyltransferases. Xylose 2-O-dephosphorylation during completion of linkage region formation is a prerequisite for the initiation and efficient elongation of the repeating disaccharide region of GAG chains. The chain is 2-phosphoxylose phosphatase 1 from Xenopus tropicalis (Western clawed frog).